We begin with the raw amino-acid sequence, 279 residues long: Presqualene diphosphate synthase (279 aa).

Belongs to the phytoene/squalene synthase family. HpnD subfamily.

It catalyses the reaction 2 (2E,6E)-farnesyl diphosphate = presqualene diphosphate + diphosphate. It participates in secondary metabolite biosynthesis; hopanoid biosynthesis. Its function is as follows. Involved in the biosynthesis of the hopanoid precursor squalene (SQ) from farnesyl diphosphate (FPP). Catalyzes the first step, the formation of presqualene diphosphate (PSPP) from two molecules of FPP. The polypeptide is Presqualene diphosphate synthase (Rhodopseudomonas palustris (strain ATCC BAA-98 / CGA009)).